An 86-amino-acid polypeptide reads, in one-letter code: Apolipoprotein C-I (86 aa).

The first 26 residues, 1-26, serve as a signal peptide directing secretion; the sequence is MRLFLSLPVLVVALLTILEGPGPAQG.

Belongs to the apolipoprotein C1 family.

Its subcellular location is the secreted. Inhibitor of lipoprotein binding to the low density lipoprotein (LDL) receptor, LDL receptor-related protein, and very low density lipoprotein (VLDL) receptor. Associates with high density lipoproteins (HDL) and the triacylglycerol-rich lipoproteins in the plasma and makes up about 10% of the protein of the VLDL and 2% of that of HDL. Appears to interfere directly with fatty acid uptake and is also the major plasma inhibitor of cholesteryl ester transfer protein (CETP). Binds free fatty acids and reduces their intracellular esterification. Modulates the interaction of APOE with beta-migrating VLDL and inhibits binding of beta-VLDL to the LDL receptor-related protein. This Plecturocebus moloch (Dusky titi monkey) protein is Apolipoprotein C-I (APOC1).